Here is a 74-residue protein sequence, read N- to C-terminus: Putative membrane protein insertion efficiency factor (74 aa).

The protein belongs to the UPF0161 family.

It localises to the cell inner membrane. Its function is as follows. Could be involved in insertion of integral membrane proteins into the membrane. The chain is Putative membrane protein insertion efficiency factor from Endomicrobium trichonymphae.